A 426-amino-acid polypeptide reads, in one-letter code: Serine--tRNA ligase (426 aa).

Thr231–Glu233 provides a ligand contact to L-serine. ATP contacts are provided by residues Arg262–Glu264 and Val278. L-serine is bound at residue Glu285. Glu349–Ser352 contributes to the ATP binding site. Residue Ser384 participates in L-serine binding.

It belongs to the class-II aminoacyl-tRNA synthetase family. Type-1 seryl-tRNA synthetase subfamily. In terms of assembly, homodimer. The tRNA molecule binds across the dimer.

The protein localises to the cytoplasm. The catalysed reaction is tRNA(Ser) + L-serine + ATP = L-seryl-tRNA(Ser) + AMP + diphosphate + H(+). It carries out the reaction tRNA(Sec) + L-serine + ATP = L-seryl-tRNA(Sec) + AMP + diphosphate + H(+). Its pathway is aminoacyl-tRNA biosynthesis; selenocysteinyl-tRNA(Sec) biosynthesis; L-seryl-tRNA(Sec) from L-serine and tRNA(Sec): step 1/1. In terms of biological role, catalyzes the attachment of serine to tRNA(Ser). Is also able to aminoacylate tRNA(Sec) with serine, to form the misacylated tRNA L-seryl-tRNA(Sec), which will be further converted into selenocysteinyl-tRNA(Sec). The chain is Serine--tRNA ligase from Chlamydia caviae (strain ATCC VR-813 / DSM 19441 / 03DC25 / GPIC) (Chlamydophila caviae).